A 622-amino-acid chain; its full sequence is WD repeat-containing protein 48 (622 aa).

A Phosphotyrosine modification is found at Tyr28. 8 WD repeats span residues 28–67 (YNRN…QDPY), 73–112 (HHTD…CMST), 115–154 (THKD…ALTA), 166–205 (GNKD…KLMK), 208–247 (GHTD…CIAT), 250–289 (VHDE…IRVL), 292–334 (EEKA…NFRA), and 358–397 (KGGA…GFSS). An N6-acetyllysine modification is found at Lys214. Lys523 is modified (N6-acetyllysine). Positions 552 to 573 (LDNESQTTSSSNNEKPGEQEKE) are disordered. The span at 554 to 565 (NESQTTSSSNNE) shows a compositional bias: low complexity. A Phosphothreonine modification is found at Thr558.

This sequence belongs to the WD repeat WDR48 family. As to quaternary structure, interacts with USP46. Interacts with USP1. Interacts with USP12. Component of the USP12-WDR20-WDR48 deubiquitinating complex. Component of the USP12-DMWD-WDR48 deubiquitinating complex. Interacts with PHLPP1. Interacts with RAD51AP1; the interaction is direct and promotes formation of a trimeric complex with RAD51 via RAD51AP1. Interacts with ATAD5; the interaction regulates USP1-mediated PCNA deubiquitination. Interacts with RAD51; the interaction is enhanced under replication stress. Interacts with ITCH; the interaction is more efficient when both USP12 and WDR48/UAF1 are involved and may facilitate recruitment of the USP12 deubiquitinating complex to Notch.

It is found in the nucleus. Its subcellular location is the cytoplasm. The protein localises to the lysosome. It localises to the late endosome. Functionally, regulator of deubiquitinating complexes, which acts as a strong activator of USP1, USP12 and USP46. Enhances the USP1-mediated deubiquitination of FANCD2; USP1 being almost inactive by itself. Activates deubiquitination by increasing the catalytic turnover without increasing the affinity of deubiquitinating enzymes for the substrate. Also activates deubiquitinating activity of complexes containing USP12. Docks at the distal end of the USP12 fingers domain and induces a cascade of structural changes leading to the activation of the enzyme. Together with RAD51AP1, promotes DNA repair by stimulating RAD51-mediated homologous recombination. Binds single-stranded DNA (ssDNA) and double-stranded DNA (dsDNA). DNA-binding is required both for USP1-mediated deubiquitination of FANCD2 and stimulation of RAD51-mediated homologous recombination: both WDR48/UAF1 and RAD51AP1 have coordinated role in DNA-binding during these processes. Together with ATAD5 and by regulating USP1 activity, has a role in PCNA-mediated translesion synthesis (TLS) by deubiquitinating monoubiquitinated PCNA. Together with ATAD5, has a role in recruiting RAD51 to stalled forks during replication stress. The chain is WD repeat-containing protein 48 (WDR48) from Macaca fascicularis (Crab-eating macaque).